A 350-amino-acid chain; its full sequence is Phospho-N-acetylmuramoyl-pentapeptide-transferase (350 aa).

9 consecutive transmembrane segments (helical) span residues 28-48 (LPLLIAAVCATATAAVGIPLL), 70-90 (GTPTMGGLLVVPVGVVLGSLI), 100-120 (LLSLAVLTLAFMLIGGIDDWS), 136-156 (LLLQAMATAAFLAIAAWQGWI), 164-184 (FGLELPLGLMIWPLGLFVVLA), 195-215 (LDGLASGCGALVFTGLALQLM), 221-241 (GDPALAGFCMAMAGAWLGFLV), 249-269 (AFMGDTGSLAMGAALSGVALL), and 328-348 (QSVVPAFWLVTAGLVLLGLVL).

It belongs to the glycosyltransferase 4 family. MraY subfamily. Mg(2+) serves as cofactor.

It is found in the cell inner membrane. The enzyme catalyses UDP-N-acetyl-alpha-D-muramoyl-L-alanyl-gamma-D-glutamyl-meso-2,6-diaminopimeloyl-D-alanyl-D-alanine + di-trans,octa-cis-undecaprenyl phosphate = di-trans,octa-cis-undecaprenyl diphospho-N-acetyl-alpha-D-muramoyl-L-alanyl-D-glutamyl-meso-2,6-diaminopimeloyl-D-alanyl-D-alanine + UMP. The protein operates within cell wall biogenesis; peptidoglycan biosynthesis. Catalyzes the initial step of the lipid cycle reactions in the biosynthesis of the cell wall peptidoglycan: transfers peptidoglycan precursor phospho-MurNAc-pentapeptide from UDP-MurNAc-pentapeptide onto the lipid carrier undecaprenyl phosphate, yielding undecaprenyl-pyrophosphoryl-MurNAc-pentapeptide, known as lipid I. This Synechococcus sp. (strain CC9605) protein is Phospho-N-acetylmuramoyl-pentapeptide-transferase.